We begin with the raw amino-acid sequence, 219 residues long: MRPYVFVNVAASLDGKISDESRKQLRISCEEDLRIVDRLRAESDAIMVGIGTVLADDPRLTVKSAELREKRQKDGKEPNPLRVVVDSRCRVPLTARILNDEARTLVAVSRIAPEEKVREVKKVAEVAVFGEERVELSALLEFLHRKGVRRLMVEGGGTLISSLISQNLVDEIRIYYGPIFIGGRDSPTVCDGESFLKKCRIEKIERIGEGFAVTARFNR.

NADP(+) contacts are provided by residues T52, D56, 87 to 90 (SRCR), V134, and 156 to 159 (GGTL).

Belongs to the HTP reductase family. In terms of assembly, homodimer.

The enzyme catalyses 2,5-diamino-6-(1-D-ribitylamino)pyrimidin-4(3H)-one 5'-phosphate + NADP(+) = 2,5-diamino-6-(1-D-ribosylamino)pyrimidin-4(3H)-one 5'-phosphate + NADPH + H(+). It carries out the reaction 2,5-diamino-6-(1-D-ribitylamino)pyrimidin-4(3H)-one 5'-phosphate + NAD(+) = 2,5-diamino-6-(1-D-ribosylamino)pyrimidin-4(3H)-one 5'-phosphate + NADH + H(+). Its pathway is cofactor biosynthesis; riboflavin biosynthesis. Functionally, catalyzes an early step in riboflavin biosynthesis, the NADPH-dependent reduction of the ribose side chain of 2,5-diamino-6-ribosylamino-4(3H)-pyrimidinone 5'-phosphate, yielding 2,5-diamino-6-ribitylamino-4(3H)-pyrimidinone 5'-phosphate. The sequence is that of 2,5-diamino-6-ribosylamino-4(3H)-pyrimidinone 5'-phosphate reductase from Archaeoglobus fulgidus (strain ATCC 49558 / DSM 4304 / JCM 9628 / NBRC 100126 / VC-16).